A 284-amino-acid polypeptide reads, in one-letter code: Bifunctional protein FolD (284 aa).

NADP(+)-binding positions include 166 to 168 and Ile-232; that span reads GAS.

Belongs to the tetrahydrofolate dehydrogenase/cyclohydrolase family. In terms of assembly, homodimer.

It carries out the reaction (6R)-5,10-methylene-5,6,7,8-tetrahydrofolate + NADP(+) = (6R)-5,10-methenyltetrahydrofolate + NADPH. The enzyme catalyses (6R)-5,10-methenyltetrahydrofolate + H2O = (6R)-10-formyltetrahydrofolate + H(+). The protein operates within one-carbon metabolism; tetrahydrofolate interconversion. Catalyzes the oxidation of 5,10-methylenetetrahydrofolate to 5,10-methenyltetrahydrofolate and then the hydrolysis of 5,10-methenyltetrahydrofolate to 10-formyltetrahydrofolate. In Pseudomonas paraeruginosa (strain DSM 24068 / PA7) (Pseudomonas aeruginosa (strain PA7)), this protein is Bifunctional protein FolD.